Reading from the N-terminus, the 192-residue chain is Probable apo-citrate lyase phosphoribosyl-dephospho-CoA transferase (192 aa).

The protein belongs to the CitX family.

The enzyme catalyses apo-[citrate lyase ACP] + 2'-(5''-triphospho-alpha-D-ribosyl)-3'-dephospho-CoA = holo-[citrate lyase ACP] + diphosphate. In terms of biological role, transfers 2-(5''-triphosphoribosyl)-3'-dephosphocoenzyme-A on a serine residue to the apo-acyl carrier protein (gamma chain) of the citrate lyase to yield holo-acyl carrier protein. The polypeptide is Probable apo-citrate lyase phosphoribosyl-dephospho-CoA transferase (Streptococcus pyogenes serotype M6 (strain ATCC BAA-946 / MGAS10394)).